We begin with the raw amino-acid sequence, 331 residues long: 6-phosphogluconolactonase (331 aa).

Lysine 287 bears the N6-acetyllysine mark.

This sequence belongs to the cycloisomerase 2 family.

It catalyses the reaction 6-phospho-D-glucono-1,5-lactone + H2O = 6-phospho-D-gluconate + H(+). Its pathway is carbohydrate degradation; pentose phosphate pathway; D-ribulose 5-phosphate from D-glucose 6-phosphate (oxidative stage): step 2/3. In terms of biological role, catalyzes the hydrolysis of 6-phosphogluconolactone to 6-phosphogluconate. The sequence is that of 6-phosphogluconolactonase from Escherichia coli O6:K15:H31 (strain 536 / UPEC).